The chain runs to 388 residues: Succinate--CoA ligase [ADP-forming] subunit beta (388 aa).

The 236-residue stretch at 9–244 folds into the ATP-grasp domain; the sequence is KQLFAEFGLP…PSQEDEREAH (236 aa). ATP is bound by residues Lys46, 53–55, Glu99, Ser102, and Glu107; that span reads GRG. Mg(2+)-binding residues include Asn199 and Asp213. Substrate-binding positions include Asn264 and 321 to 323; that span reads GIV.

Belongs to the succinate/malate CoA ligase beta subunit family. Heterotetramer of two alpha and two beta subunits. It depends on Mg(2+) as a cofactor.

It carries out the reaction succinate + ATP + CoA = succinyl-CoA + ADP + phosphate. The enzyme catalyses GTP + succinate + CoA = succinyl-CoA + GDP + phosphate. The protein operates within carbohydrate metabolism; tricarboxylic acid cycle; succinate from succinyl-CoA (ligase route): step 1/1. Its function is as follows. Succinyl-CoA synthetase functions in the citric acid cycle (TCA), coupling the hydrolysis of succinyl-CoA to the synthesis of either ATP or GTP and thus represents the only step of substrate-level phosphorylation in the TCA. The beta subunit provides nucleotide specificity of the enzyme and binds the substrate succinate, while the binding sites for coenzyme A and phosphate are found in the alpha subunit. This Aliivibrio fischeri (strain ATCC 700601 / ES114) (Vibrio fischeri) protein is Succinate--CoA ligase [ADP-forming] subunit beta.